The sequence spans 579 residues: Folliculin (579 aa).

Residues 32–52 are disordered; the sequence is GASCGDSIGQGEQAEDEEMGI. The uDENN FLCN/SMCR8-type domain occupies 86-242; it reads RSLAAGHPGY…RNGNAARSLT (157 aa). In terms of domain architecture, cDENN FLCN/SMCR8-type spans 337–491; the sequence is NMVQRRMGVF…ILNKIEAALS (155 aa). The 66-residue stretch at 493 to 558 folds into the dDENN FLCN/SMCR8-type domain; sequence ENLSMDVVDQ…LLKFWMTGLS (66 aa).

This sequence belongs to the folliculin family. As to quaternary structure, component of the lysosomal folliculin complex (LFC).

Its subcellular location is the lysosome membrane. The protein localises to the cytoplasm. It localises to the cytosol. It is found in the cell projection. The protein resides in the cilium. Its subcellular location is the cytoskeleton. The protein localises to the microtubule organizing center. It localises to the centrosome. It is found in the spindle. The protein resides in the nucleus. GTPase-activating activity is inhibited in the folliculin complex (LFC), which stabilizes the GDP-bound state of RagA/RRAGA (or RagB/RRAGB), because Arg-164 is located far from the RagC/RRAGC or RagD/RRAGD nucleotide pocket. Disassembly of the LFC complex upon amino acid restimulation liberates the GTPase-activating activity. Functionally, multi-functional protein, involved in both the cellular response to amino acid availability and in the regulation of glycolysis. GTPase-activating protein that plays a key role in the cellular response to amino acid availability through regulation of the non-canonical mTORC1 signaling cascade controlling the MiT/TFE factors tfeb and tfe3. Activates mTORC1 by acting as a GTPase-activating protein: specifically stimulates GTP hydrolysis by RagC/RRAGC or RagD/RRAGD, promoting the conversion to the GDP-bound state of RagC/RRAGC or RagD/RRAGD, and thereby activating the kinase activity of mTORC1. The GTPase-activating activity is inhibited during starvation and activated in presence of nutrients. Acts as a key component for non-canonical mTORC1-dependent control of the MiT/TFE factors tfeb and tfe3, while it is not involved in mTORC1-dependent phosphorylation of canonical RPS6KB1/S6K1 and EIF4EBP1/4E-BP1. In low-amino acid conditions, the lysosomal folliculin complex (LFC) is formed on the membrane of lysosomes, which inhibits the GTPase-activating activity of flcn, inactivates mTORC1 and maximizes nuclear translocation of tfeb and tfe3. Upon amino acid restimulation, RagA/RRAGA (or RagB/RRAGB) nucleotide exchange promotes disassembly of the LFC complex and liberates the GTPase-activating activity of flcn, leading to activation of mTORC1 and subsequent cytoplasmic retention of tfeb and tfe3. Required for the exit of hematopoietic stem cell from pluripotency by promoting mTOR-dependent cytoplasmic retention of tfe3, thereby increasing Wnt signaling. Acts as an inhibitor of browning of adipose tissue by regulating mTOR-dependent cytoplasmic retention of tfe3. In response to flow stress, regulates STK11/LKB1 accumulation and mTORC1 activation through primary cilia. Required for starvation-induced perinuclear clustering of lysosomes by promoting association of rilp with its effector rab34. Involved in the control of embryonic stem cells differentiation; together with lamtor1 it is necessary to recruit and activate RagC/RRAGC and RagD/RRAGD at the lysosomes, and to induce exit of embryonic stem cells from pluripotency via non-canonical, mTOR-independent tfe3 inactivation. Regulates glycolysis by binding to lactate dehydrogenase ldha, acting as an uncompetitive inhibitor. This Xenopus tropicalis (Western clawed frog) protein is Folliculin.